The chain runs to 1377 residues: MNRIYSLRYSAVARGFIAVSEFARKCVHKSVRRLCFPVLLLIPVLFSAGSLAGTVNNELGYQLFRDFAENKGMFRPGATNIAIYNKQGEFVGTLDKAAMPDFSAVDSEIGVATLINPQYIASVKHNGGYTNVSFGDGENRYNIVDRNNAPSLDFHAPRLDKLVTEVAPTAVTAQGAVAGAYLDKERYPVFYRLGSGTQYIKDSNGQLTKMGGAYSWLTGGTVGSLSSYQNGEMISTSSGLVFDYKLNGAMPIYGEAGDSGSPLFAFDTVQNKWVLVGVLTAGNGAGGRGNNWAVIPLDFIGQKFNEDNDAPVTFRTSEGGALEWSFNSSTGAGALTQGTTTYAMHGQQGNDLNAGKNLIFQGQNGQINLKDSVSQGAGSLTFRDNYTVTTSNGSTWTGAGIVVDNGVSVNWQVNGVKGDNLHKIGEGTLTVQGTGINEGGLKVGDGKVVLNQQADNKGQVQAFSSVNIASGRPTVVLTDERQVNPDTVSWGYRGGTLDVNGNSLTFHQLKAADYGAVLANNVDKRATITLDYALRADKVALNGWSESGKGTAGNLYKYNNPYTNTTDYFILKQSTYGYFPTDQSSNATWEFVGHSQGDAQKLVADRFNTAGYLFHGQLKGNLNVDNRLPEGVTGALVMDGAADISGTFTQENGRLTLQGHPVIHAYNTQSVADKLAASGDHSVLTQPTSFSQEDWENRSFTFDRLSLKNTDFGLGRNATLNTTIQADNSSVTLGDSRVFIDKNDGQGTAFTLEEGTSVATKDADKSVFNGTVNLDNQSVLNINDIFNGGIQANNSTVNISSDSAVLGNSTLTSTALNLNKGANALASQSFVSDGPVNISDATLSLNSRPDEVSHTLLPVYDYAGSWNLKGDDARLNVGPYSMLSGNINVQDKGTVTLGGEGELSPDLTLQNQMLYSLFNGYRNIWSGSLNAPDATVSMTDTQWSMNGNSTAGNMKLNRTIVGFNGGTSPFTTLTTDNLDAVQSAFVMRTDLNKADKLVINKSATGHDNSIWVNFLKKPSNKDTLDIPLVSAPEATADNLFRASTRVVGFSDVTPILSVRKEDGKKEWVLDGYQVARNDGQGKAAATFMHISYNNFITEVNNLNKRMGDLRDINGEAGTWVRLLNGSGSADGGFTDHYTLLQMGADRKHELGSMDLFTGVMATYTDTDASADLYSGKTKSWGGGFYASGLFRSGAYFDVIAKYIHNENKYDLNFAGAGKQNFRSHSLYAGAEVGYRYHLTDTTFVEPQAELVWGRLQGQTFNWNDSGMDVSMRRNSVNPLVGRTGVVSGKTFSGKDWSLTARAGLHYEFDLTDSADVHLKDAAGEHQINGRKDSRMLYGVGLNARFGDNTRLGLEVERSAFGKYNTDDAINANIRYSF.

The first 52 residues, 1-52, serve as a signal peptide directing secretion; that stretch reads MNRIYSLRYSAVARGFIAVSEFARKCVHKSVRRLCFPVLLLIPVLFSAGSLA. The 250-residue stretch at 53-302 folds into the Peptidase S6 domain; that stretch reads GTVNNELGYQ…AVIPLDFIGQ (250 aa). Residues His125, Asp153, and Ser259 each act as charge relay system in the active site. Positions 1111 to 1377 constitute an Autotransporter domain; it reads DINGEAGTWV…AINANIRYSF (267 aa).

Post-translationally, cleaved to release the mature protein from the outer membrane.

The protein localises to the periplasm. The protein resides in the secreted. It is found in the cell surface. Its subcellular location is the cell outer membrane. Protease activity is inhibited by 3,4-dichloroisocoumarin. In terms of biological role, interacts with hemoglobin, degrades it and subsequently binds the released heme. Could make heme accessible not only for E.coli, but also for B.fragilis during mixed intra-abdominal infections. Has a role in abscess formation. This is Hemoglobin-binding protease hbp autotransporter (hbp) from Escherichia coli.